Consider the following 122-residue polypeptide: Basic phospholipase A2 homolog (122 aa).

Intrachain disulfides connect C26-C116, C28-C44, C43-C96, C49-C122, C50-C89, C57-C82, and C75-C87. The important for membrane-damaging activities in eukaryotes and bacteria; heparin-binding stretch occupies residues 106–117 (KKHRVTVKFLCK).

The protein belongs to the phospholipase A2 family. Group II subfamily. K49 sub-subfamily. As to quaternary structure, homodimer; non-covalently linked. Expressed by the venom gland.

Its subcellular location is the secreted. Its function is as follows. Snake venom phospholipase A2 (PLA2) that has almost no phospholipase A2 activity. Is myotoxic. Displays edema-inducing activities. A model of myotoxic mechanism has been proposed: an apo Lys49-PLA2 is activated by the entrance of a hydrophobic molecule (e.g. fatty acid) at the hydrophobic channel of the protein leading to a reorientation of a monomer. This reorientation causes a transition between 'inactive' to 'active' states, causing alignment of C-terminal and membrane-docking sites (MDoS) side-by-side and putting the membrane-disruption sites (MDiS) in the same plane, exposed to solvent and in a symmetric position for both monomers. The MDoS region stabilizes the toxin on membrane by the interaction of charged residues with phospholipid head groups. Subsequently, the MDiS region destabilizes the membrane with penetration of hydrophobic residues. This insertion causes a disorganization of the membrane, allowing an uncontrolled influx of ions (i.e. calcium and sodium), and eventually triggering irreversible intracellular alterations and cell death. This chain is Basic phospholipase A2 homolog, found in Protobothrops mucrosquamatus (Taiwan habu).